A 392-amino-acid chain; its full sequence is Galactokinase (392 aa).

The alpha-D-galactose site is built by arginine 37, glutamate 43, histidine 44, and aspartate 46. Positions 136, 138, 140, and 141 each coordinate ATP. Aspartate 186 lines the alpha-D-galactose pocket. The active-site Proton acceptor is aspartate 186. Phosphoserine is present on serine 230. Tyrosine 236 provides a ligand contact to alpha-D-galactose.

This sequence belongs to the GHMP kinase family. GalK subfamily. As to quaternary structure, homodimer.

It carries out the reaction alpha-D-galactose + ATP = alpha-D-galactose 1-phosphate + ADP + H(+). Its pathway is carbohydrate metabolism; galactose metabolism. Functionally, catalyzes the transfer of a phosphate from ATP to alpha-D-galactose and participates in the first committed step in the catabolism of galactose. In Homo sapiens (Human), this protein is Galactokinase.